Consider the following 242-residue polypeptide: UPF0246 protein SPP_1571 (242 aa).

It belongs to the UPF0246 family.

This Streptococcus pneumoniae (strain P1031) protein is UPF0246 protein SPP_1571.